Reading from the N-terminus, the 377-residue chain is Probable tRNA pseudouridine synthase D (377 aa).

Catalysis depends on aspartate 89, which acts as the Nucleophile. Positions 160–377 constitute a TRUD domain; it reads YLPAFIGYQR…ILRGDPRKFT (218 aa).

It belongs to the pseudouridine synthase TruD family.

It carries out the reaction uridine(13) in tRNA = pseudouridine(13) in tRNA. Functionally, could be responsible for synthesis of pseudouridine from uracil-13 in transfer RNAs. This chain is Probable tRNA pseudouridine synthase D, found in Saccharolobus solfataricus (strain ATCC 35092 / DSM 1617 / JCM 11322 / P2) (Sulfolobus solfataricus).